The primary structure comprises 605 residues: Meiosis-specific protein HOP1 (605 aa).

The 231-residue stretch at 20–250 (EQSQKLLQTM…TKHHKVALSV (231 aa)) folds into the HORMA domain. A zinc finger lies at 348 to 364 (CKSCRKTLHGICYGNFL).

It localises to the nucleus. Its subcellular location is the chromosome. Functionally, probable constituent of the synaptonemal complex during meiosis. May interact with RED1. The polypeptide is Meiosis-specific protein HOP1 (HOP1) (Saccharomyces cerevisiae (strain ATCC 204508 / S288c) (Baker's yeast)).